Here is a 308-residue protein sequence, read N- to C-terminus: Ferredoxin--NADP reductase (308 aa).

FAD contacts are provided by E26, Q34, Y39, V77, F106, D266, and T306.

It belongs to the ferredoxin--NADP reductase type 2 family. Homodimer. Requires FAD as cofactor.

The enzyme catalyses 2 reduced [2Fe-2S]-[ferredoxin] + NADP(+) + H(+) = 2 oxidized [2Fe-2S]-[ferredoxin] + NADPH. The protein is Ferredoxin--NADP reductase of Lactobacillus delbrueckii subsp. bulgaricus (strain ATCC 11842 / DSM 20081 / BCRC 10696 / JCM 1002 / NBRC 13953 / NCIMB 11778 / NCTC 12712 / WDCM 00102 / Lb 14).